A 90-amino-acid polypeptide reads, in one-letter code: Small ribosomal subunit protein bS16 (90 aa).

It belongs to the bacterial ribosomal protein bS16 family.

The sequence is that of Small ribosomal subunit protein bS16 from Bacillus pumilus (strain SAFR-032).